A 90-amino-acid chain; its full sequence is Large ribosomal subunit protein bL27 (90 aa).

Residues Met-1–Arg-20 are disordered.

Belongs to the bacterial ribosomal protein bL27 family.

This chain is Large ribosomal subunit protein bL27, found in Rhodopseudomonas palustris (strain ATCC BAA-98 / CGA009).